Consider the following 200-residue polypeptide: uncharacterized protein (200 aa).

The signal sequence occupies residues 1-24 (MSRVFSCVLRACVCAGLCCWVCMG). Residues 124–200 (GGRDLPMHGA…GEGGDNGEGE (77 aa)) form a disordered region. Residues 184–200 (LGDEGETGEGGDNGEGE) show a composition bias toward acidic residues.

This is an uncharacterized protein from Homo sapiens (Human).